A 224-amino-acid polypeptide reads, in one-letter code: Metalloproteinase inhibitor 4 (224 aa).

Positions 1-29 are cleaved as a signal peptide; the sequence is MPWSPLAALSWALVLRLLALLWPPGRGEA. A Zn(2+)-binding site is contributed by Cys-30. Involved in metalloproteinase-binding regions lie at residues 30–33 and 99–100; these read CSCA and SS. 6 cysteine pairs are disulfide-bonded: Cys-30/Cys-102, Cys-32/Cys-131, Cys-42/Cys-156, Cys-158/Cys-205, Cys-163/Cys-168, and Cys-176/Cys-197. In terms of domain architecture, NTR spans 30–156; that stretch reads CSCAPAHPQQ…SLNHHYHQNC (127 aa).

Belongs to the protease inhibitor I35 (TIMP) family. As to expression, expressed in retina, smooth muscle, skin, pancreas, skeletal muscle, heart, brain, lung, kidney and testis. Not found in cartilage, spleen and liver.

Its subcellular location is the secreted. In terms of biological role, complexes with metalloproteinases (such as collagenases) and irreversibly inactivates them by binding to their catalytic zinc cofactor. The polypeptide is Metalloproteinase inhibitor 4 (Timp4) (Rattus norvegicus (Rat)).